We begin with the raw amino-acid sequence, 203 residues long: Recombination protein RecR (203 aa).

A C4-type zinc finger spans residues 58–73; sequence CDYCGNLDVVSICNIC. Residues 81-177 enclose the Toprim domain; sequence SIIAIVESVA…KISKLASGIP (97 aa).

This sequence belongs to the RecR family.

Functionally, may play a role in DNA repair. It seems to be involved in an RecBC-independent recombinational process of DNA repair. It may act with RecF and RecO. This chain is Recombination protein RecR, found in Orientia tsutsugamushi (strain Boryong) (Rickettsia tsutsugamushi).